Reading from the N-terminus, the 228-residue chain is PKHD-type hydroxylase RPE_4577 (228 aa).

Residues 78-180 (TIFPPLFNRY…RIASFFWTQS (103 aa)) enclose the Fe2OG dioxygenase domain. 3 residues coordinate Fe cation: histidine 98, aspartate 100, and histidine 161. 2-oxoglutarate is bound at residue arginine 171.

It depends on Fe(2+) as a cofactor. L-ascorbate is required as a cofactor.

The sequence is that of PKHD-type hydroxylase RPE_4577 from Rhodopseudomonas palustris (strain BisA53).